Reading from the N-terminus, the 285-residue chain is Bifunctional protein FolD (285 aa).

NADP(+)-binding positions include 165–167 (GRS), serine 190, and isoleucine 231.

It belongs to the tetrahydrofolate dehydrogenase/cyclohydrolase family. Homodimer.

It carries out the reaction (6R)-5,10-methylene-5,6,7,8-tetrahydrofolate + NADP(+) = (6R)-5,10-methenyltetrahydrofolate + NADPH. The enzyme catalyses (6R)-5,10-methenyltetrahydrofolate + H2O = (6R)-10-formyltetrahydrofolate + H(+). The protein operates within one-carbon metabolism; tetrahydrofolate interconversion. In terms of biological role, catalyzes the oxidation of 5,10-methylenetetrahydrofolate to 5,10-methenyltetrahydrofolate and then the hydrolysis of 5,10-methenyltetrahydrofolate to 10-formyltetrahydrofolate. In Acetivibrio thermocellus (strain ATCC 27405 / DSM 1237 / JCM 9322 / NBRC 103400 / NCIMB 10682 / NRRL B-4536 / VPI 7372) (Clostridium thermocellum), this protein is Bifunctional protein FolD.